A 159-amino-acid chain; its full sequence is Pathogenesis-related leaf protein 4 (159 aa).

The first 24 residues, 1–24 (MGLFNISLLLTCLMVLAIFHSCEA), serve as a signal peptide directing secretion. A Pyrrolidone carboxylic acid modification is found at Gln25. The SCP domain occupies 32–147 (LAVHNDARAQ…NGWWFISCNY (116 aa)). 3 disulfides stabilise this stretch: Cys68–Cys136, Cys109–Cys115, and Cys131–Cys145.

Belongs to the CRISP family.

Its function is as follows. Probably involved in the defense reaction of plants against pathogens. The protein is Pathogenesis-related leaf protein 4 of Solanum lycopersicum (Tomato).